Reading from the N-terminus, the 51-residue chain is Zinc metalloproteinase-disintegrin-like crovidisin (51 aa).

In terms of domain architecture, Peptidase M12B spans 1-12 (AMVTKNNGDLDK). The 6-residue stretch at 13–18 (SGTECR) folds into the Disintegrin domain. A glycan (N-linked (GlcNAc...) asparagine) is linked at asparagine 29.

Belongs to the venom metalloproteinase (M12B) family. P-III subfamily. P-IIIa sub-subfamily. As to quaternary structure, monomer. Requires Zn(2+) as cofactor. As to expression, expressed by the venom gland.

Its subcellular location is the secreted. Its function is as follows. Snake venom zinc metalloproteinase-disintegrin-like that blocks the interaction between platelets and collagen fibers through its binding to collagen fibers, resulting in the blockade of collagen-mediated platelet functions such as adhesion, release reaction, thromboxane formation, and aggregation. Binds selectively to collagen type I with high affinity. Also exerts proteolytic activity to matrix. The chain is Zinc metalloproteinase-disintegrin-like crovidisin from Crotalus viridis viridis (Prairie rattlesnake).